Consider the following 468-residue polypeptide: Plant UBX domain-containing protein 7 (468 aa).

Residue methionine 1 is modified to N-acetylmethionine. Positions serine 7 to tyrosine 48 constitute a UBA-like domain. Disordered stretches follow at residues lysine 138 to arginine 168 and histidine 299 to glutamate 329. Over residues serine 150–alanine 166 the composition is skewed to low complexity. Residues glutamate 328 to lysine 347 form the UIM domain. In terms of domain architecture, UBX spans aspartate 385–threonine 466.

Interacts with CDC48A via its UBX domain and with ubiquitin via its N-terminal UBA-like domain. Expressed broadly in sporophyte and gametophyte cells.

The protein resides in the nucleus. Its function is as follows. Acts as a bridge between CDC48A and ubiquitin, suggesting a role in targeted protein degradation. The protein is Plant UBX domain-containing protein 7 of Arabidopsis thaliana (Mouse-ear cress).